The sequence spans 189 residues: 6,7-dimethyl-8-ribityllumazine synthase (189 aa).

5-amino-6-(D-ribitylamino)uracil is bound by residues W31, 65-67, and 89-91; these read SFE and CVI. 94 to 95 serves as a coordination point for (2S)-2-hydroxy-3-oxobutyl phosphate; that stretch reads ET. The active-site Proton donor is H97. Residue F122 participates in 5-amino-6-(D-ribitylamino)uracil binding. R136 contributes to the (2S)-2-hydroxy-3-oxobutyl phosphate binding site.

It belongs to the DMRL synthase family.

It carries out the reaction (2S)-2-hydroxy-3-oxobutyl phosphate + 5-amino-6-(D-ribitylamino)uracil = 6,7-dimethyl-8-(1-D-ribityl)lumazine + phosphate + 2 H2O + H(+). It functions in the pathway cofactor biosynthesis; riboflavin biosynthesis; riboflavin from 2-hydroxy-3-oxobutyl phosphate and 5-amino-6-(D-ribitylamino)uracil: step 1/2. In terms of biological role, catalyzes the formation of 6,7-dimethyl-8-ribityllumazine by condensation of 5-amino-6-(D-ribitylamino)uracil with 3,4-dihydroxy-2-butanone 4-phosphate. This is the penultimate step in the biosynthesis of riboflavin. The chain is 6,7-dimethyl-8-ribityllumazine synthase from Flavobacterium psychrophilum (strain ATCC 49511 / DSM 21280 / CIP 103535 / JIP02/86).